A 4146-amino-acid chain; its full sequence is DNA-dependent protein kinase catalytic subunit (4146 aa).

4 HEAT repeats span residues 308–343 (DDYQSLFEVISKWCGHTNGEMKKLAFAALDSFLKQI), 925–962 (VIYLDMFLPHITELALSTSDRQTKVAACELLHSIVAFM), 1026–1062 (QDTVALLEAILTGIVDPVDSTLRDFCGQCIQEFLRWS), and 1075–1111 (PVNTTSLFKRLYSLALHPNAFKRLGAALAFNNIYRDF). TPR repeat units lie at residues 1745–1778 (PMKSDEFPKGTLKFNNYVDCIKKFLDALELSQSP) and 1974–2007 (VFSELKFYQGFLFTEKKEKNLLIFENLIDLQRNY). A Phosphoserine; by autocatalysis modification is found at S2075. The residue at position 2631 (T2631) is a Phosphothreonine; by autocatalysis. At S2634 the chain carries Phosphoserine; by autocatalysis. A phosphothreonine; by autocatalysis mark is found at T2659 and T2668. Residues 2873–3556 (FIACVQDMCY…VYPFMVSGES (684 aa)) enclose the FAT domain. In terms of domain architecture, PI3K/PI4K catalytic spans 3739-4071 (FDERVSVMAS…IHCAKRKLDG (333 aa)). A G-loop region spans residues 3745–3751 (VMASIRK). The tract at residues 3937 to 3945 (GIGDRHLSN) is catalytic loop. The segment at 3957–3982 (GIDFGHAFGTATQFLPVPELMPFRLT) is activation loop. The region spanning 4114 to 4146 (DGLTEETQVQCLIDQATDPNILGRVWKGWEPWI) is the FATC domain.

Belongs to the PI3/PI4-kinase family. As to quaternary structure, DNA-PK is a heterotrimer of prkdc and the Ku dimer (composed of xrcc6/Ku70 and xrcc5/Ku86). Component of the core long-range non-homologous end joining (NHEJ) complex (also named DNA-PK complex) composed of prkdc, lig4, xrcc4, xrcc6/ku70, xrcc5/ku86 and nhej1/xlf. Additional component of the NHEJ complex includes paxx. Following autophosphorylation, prkdc dissociates from DNA. In terms of processing, autophosphorylated at two clusters, the T2609 cluster and the S2056 cluster. Autophosphorylated on Ser-2075, Thr-2631, Thr-2659 and Thr-2668. Ser-2075 and Thr-2668 are DNA damage-inducible phosphorylation sites (inducible with ionizing radiation, IR) dephosphorylated by PPP5C. Autophosphorylation induces a conformational change that leads to remodeling of the DNA-PK complex, requisite for efficient end processing and DNA repair. Autophosphorylation in trans within DNA-PK complexes loaded on DNA ends leads to the dissociation of PRKDC from DNA and the transition into the short-range NHEJ complex. Autophosphorylation of the T2609 cluster is required for hematopoietic development and protein synthesis in erythrocytes precursors.

Its subcellular location is the nucleus. It localises to the nucleolus. The enzyme catalyses L-seryl-[protein] + ATP = O-phospho-L-seryl-[protein] + ADP + H(+). The catalysed reaction is L-threonyl-[protein] + ATP = O-phospho-L-threonyl-[protein] + ADP + H(+). Functionally, serine/threonine-protein kinase that acts as a molecular sensor for DNA damage. Involved in DNA nonhomologous end joining (NHEJ) required for double-strand break (DSB) repair and V(D)J recombination. Must be bound to DNA to express its catalytic properties. Promotes processing of hairpin DNA structures in V(D)J recombination by activation of the hairpin endonuclease artemis (DCLRE1C). Recruited by XRCC5 and XRCC6 to DNA ends and is required to (1) protect and align broken ends of DNA, thereby preventing their degradation, (2) and sequester the DSB for repair by NHEJ. Acts as a scaffold protein to aid the localization of DNA repair proteins to the site of damage. The assembly of the DNA-PK complex at DNA ends is also required for the NHEJ ligation step. Found at the ends of chromosomes, suggesting a further role in the maintenance of telomeric stability and the prevention of chromosomal end fusion. As part of the DNA-PK complex, involved in the early steps of ribosome assembly by promoting the processing of precursor rRNA into mature 18S rRNA in the small-subunit processome. Recognizes the substrate consensus sequence [ST]-Q. Phosphorylates 'Ser-139' of histone variant H2AX, thereby regulating DNA damage response mechanism. In Xenopus laevis (African clawed frog), this protein is DNA-dependent protein kinase catalytic subunit (prkdc).